The chain runs to 346 residues: tRNA N6-adenosine threonylcarbamoyltransferase (346 aa).

Residues His-111 and His-115 each coordinate Fe cation. Substrate contacts are provided by residues 134-138, Asp-167, Gly-180, Asp-184, and Asn-279; that span reads LVSGG. Fe cation is bound at residue Asp-307.

This sequence belongs to the KAE1 / TsaD family. Requires Fe(2+) as cofactor.

It localises to the cytoplasm. It carries out the reaction L-threonylcarbamoyladenylate + adenosine(37) in tRNA = N(6)-L-threonylcarbamoyladenosine(37) in tRNA + AMP + H(+). In terms of biological role, required for the formation of a threonylcarbamoyl group on adenosine at position 37 (t(6)A37) in tRNAs that read codons beginning with adenine. Is involved in the transfer of the threonylcarbamoyl moiety of threonylcarbamoyl-AMP (TC-AMP) to the N6 group of A37, together with TsaE and TsaB. TsaD likely plays a direct catalytic role in this reaction. The protein is tRNA N6-adenosine threonylcarbamoyltransferase of Trichormus variabilis (strain ATCC 29413 / PCC 7937) (Anabaena variabilis).